The sequence spans 174 residues: Guided entry of tail-anchored proteins factor 1 (174 aa).

The Lumenal segment spans residues M1–H8. The helical transmembrane segment at W9 to P29 threads the bilayer. Residues S30–K99 lie on the Cytoplasmic side of the membrane. Residues L39–T94 are a coiled coil. An interaction with GET3/TRC40 region spans residues L39 to L97. A helical transmembrane segment spans residues I100–I120. The Lumenal segment spans residues W121 to R148. A helical membrane pass occupies residues V149–V169. The Cytoplasmic portion of the chain corresponds to L170–S174.

This sequence belongs to the WRB/GET1 family. Component of the Golgi to ER traffic (GET) complex, which is composed of GET1/WRB, CAMLG/GET2 and GET3/TRC40. Within the complex, GET1 and CAMLG form a heterotetramer which is stabilized by phosphatidylinositol binding and which binds to the GET3 homodimer. Interacts with CAMLG (via C-terminus). GET3 shows a higher affinity for CAMLG than for GET1.

Its subcellular location is the endoplasmic reticulum membrane. In terms of biological role, required for the post-translational delivery of tail-anchored (TA) proteins to the endoplasmic reticulum (ER). Together with CAMLG/GET2, acts as a membrane receptor for soluble GET3/TRC40, which recognizes and selectively binds the transmembrane domain of TA proteins in the cytosol. Required to ensure correct topology and ER insertion of CAMLG. In Homo sapiens (Human), this protein is Guided entry of tail-anchored proteins factor 1.